Reading from the N-terminus, the 326-residue chain is tRNA-dihydrouridine(20a/20b) synthase [NAD(P)+] (326 aa).

FMN contacts are provided by residues 26–28 and Gln-79; that span reads PMV. Cys-108 (proton donor) is an active-site residue. FMN contacts are provided by residues Lys-149, His-177, 208–210, and 232–233; these read NGD and AR.

Belongs to the Dus family. Dus4 subfamily. It depends on FMN as a cofactor.

The protein resides in the mitochondrion. It carries out the reaction 5,6-dihydrouridine(20a) in tRNA + NADP(+) = uridine(20a) in tRNA + NADPH + H(+). The catalysed reaction is 5,6-dihydrouridine(20a) in tRNA + NAD(+) = uridine(20a) in tRNA + NADH + H(+). It catalyses the reaction 5,6-dihydrouridine(20b) in tRNA + NAD(+) = uridine(20b) in tRNA + NADH + H(+). The enzyme catalyses 5,6-dihydrouridine(20b) in tRNA + NADP(+) = uridine(20b) in tRNA + NADPH + H(+). It carries out the reaction a 5,6-dihydrouridine in mRNA + NAD(+) = a uridine in mRNA + NADH + H(+). The catalysed reaction is a 5,6-dihydrouridine in mRNA + NADP(+) = a uridine in mRNA + NADPH + H(+). Catalyzes the synthesis of dihydrouridine, a modified base found in the D-loop of most tRNAs. Also able to mediate dihydrouridylation of some mRNAs, thereby affecting their translation. In Schizosaccharomyces pombe (strain 972 / ATCC 24843) (Fission yeast), this protein is tRNA-dihydrouridine(20a/20b) synthase [NAD(P)+].